The chain runs to 635 residues: MIDSTCYPRLSRIQTPEDLRAFQESELRAVADELRNYLIESVGLSGGHFAAGLGVVELTIALHYLYCTPIDQLVWDVGHQTYPHKILTGRRDKISTVKHQGGLAPFPKREESIYDTFGVGHSSTSISAALGMAIVAQRNGDERKVVAIIGDGAMTAGMAYEALNHAGGMSPAPNLLVILNDNRMSISEAVGGLTKMLGRATGSKALNAIREGGKRIFGDKKTNATARFLRRWEEHWKGMFVPSTLFEEMGFHYTGPIDGHDLPALLGALKTLRTLKGPQLLHVITTKGKGYELAEGDQIGYHAVAPFDPQKGLIKAGAKKQTYTDVFSEWLCDMAAVEPRLLAITPAMREGSGLVRFSQEYPQRYFDVAIAEQHAITLAAGMATQGAKPVVAIYSTFLQRGYDQLVHDVALQKLDVLFAVDRGGVVGPDGATHAGNLDLSFLRCVPNMMLMAPADEAECRKMLSTGFHYSGPVAVRYPRGTGPGVVPSAELDVLPVGVAQLRHSGTRIALLGFGVCVAPAEQVGRRLGLTVVNMRFIKPLDRTLLLELARTHEVFVTIEDNVVAGGAGSGVAELLNAEGIVLPIVHLGLPDAFQQHASREDLLAEAGIDAAGVYAALLSRWPDLAVQNHPLSAVS.

Thiamine diphosphate contacts are provided by residues His79 and 120–122; that span reads GHS. A Mg(2+)-binding site is contributed by Asp151. Residues 152 to 153, Asn182, Tyr291, and Glu372 each bind thiamine diphosphate; that span reads GA. Asn182 provides a ligand contact to Mg(2+).

It belongs to the transketolase family. DXPS subfamily. Homodimer. Mg(2+) is required as a cofactor. Requires thiamine diphosphate as cofactor.

The catalysed reaction is D-glyceraldehyde 3-phosphate + pyruvate + H(+) = 1-deoxy-D-xylulose 5-phosphate + CO2. Its pathway is metabolic intermediate biosynthesis; 1-deoxy-D-xylulose 5-phosphate biosynthesis; 1-deoxy-D-xylulose 5-phosphate from D-glyceraldehyde 3-phosphate and pyruvate: step 1/1. In terms of biological role, catalyzes the acyloin condensation reaction between C atoms 2 and 3 of pyruvate and glyceraldehyde 3-phosphate to yield 1-deoxy-D-xylulose-5-phosphate (DXP). The polypeptide is 1-deoxy-D-xylulose-5-phosphate synthase (Xylella fastidiosa (strain M12)).